The sequence spans 283 residues: Mitochondrial outer membrane protein porin (283 aa).

The protein belongs to the eukaryotic mitochondrial porin family.

The protein localises to the mitochondrion outer membrane. Functionally, forms a channel through the cell membrane that allows diffusion of small hydrophilic molecules. The channel adopts an open conformation at low or zero membrane potential and a closed conformation at potentials above 30-40 mV. The open state has a weak anion selectivity whereas the closed state is cation-selective. The protein is Mitochondrial outer membrane protein porin of Neurospora crassa (strain ATCC 24698 / 74-OR23-1A / CBS 708.71 / DSM 1257 / FGSC 987).